Reading from the N-terminus, the 141-residue chain is ATP synthase F(0) complex subunit C2, mitochondrial (141 aa).

The transit peptide at 1–66 (MYACSKFVST…RSFQTSAISR (66 aa)) directs the protein to the mitochondrion. The chain crosses the membrane as a helical span at residues 82-102 (VGVAGSGAGIGTVFGSLIIGY). K109 is subject to N6,N6,N6-trimethyllysine. The chain crosses the membrane as a helical span at residues 117 to 137 (ILGFALSEAMGLFCLMVAFLI).

This sequence belongs to the ATPase C chain family. F-type ATPases have 2 components, CF(1) - the catalytic core - and CF(0) - the membrane proton channel. CF(1) has five subunits: alpha(3), beta(3), gamma(1), delta(1), epsilon(1). CF(0) has three main subunits: a, b and c. Interacts with DNAJC30; interaction is direct. Post-translationally, trimethylated by ATPSCKMT at Lys-109. Methylation is required for proper incorporation of the C subunit into the ATP synthase complex and mitochondrial respiration.

It localises to the mitochondrion membrane. Mitochondrial membrane ATP synthase (F(1)F(0) ATP synthase or Complex V) produces ATP from ADP in the presence of a proton gradient across the membrane which is generated by electron transport complexes of the respiratory chain. F-type ATPases consist of two structural domains, F(1) - containing the extramembraneous catalytic core and F(0) - containing the membrane proton channel, linked together by a central stalk and a peripheral stalk. During catalysis, ATP synthesis in the catalytic domain of F(1) is coupled via a rotary mechanism of the central stalk subunits to proton translocation. Part of the complex F(0) domain. A homomeric c-ring of probably 10 subunits is part of the complex rotary element. This Rattus norvegicus (Rat) protein is ATP synthase F(0) complex subunit C2, mitochondrial.